Consider the following 918-residue polypeptide: Alpha-scruin (918 aa).

Kelch repeat units follow at residues 82–133 (VVLA…YFHR), 134–187 (RVYV…VMDE), 188–235 (RIFV…NNEG), 237–289 (IYVI…TQNK), 291–341 (IWIW…KTGA), and 342–390 (HVFI…AIPA). Residues 398–427 (EVPTSTPSSKAKPQPGSKPTSVKYKKQPDI) form a disordered region. The 30-residue stretch at 430-459 (RNEAAKKVQRRWRRYIEQKSITKRMQQGDS) folds into the IQ domain. 6 Kelch repeats span residues 590 to 641 (VIIG…YYRS), 642 to 695 (AIYI…VFND), 696 to 743 (VLYA…AHGG), 745 to 795 (IWLL…VCDN), 797 to 849 (IWLC…ALES), and 851 to 898 (LYIA…TIPP).

As to expression, sperm.

Actin bundling protein found in the acrosomal sperm process. This is Alpha-scruin from Limulus polyphemus (Atlantic horseshoe crab).